Here is a 116-residue protein sequence, read N- to C-terminus: Large ribosomal subunit protein bL17 (116 aa).

Belongs to the bacterial ribosomal protein bL17 family. In terms of assembly, part of the 50S ribosomal subunit. Contacts protein L32.

In Prochlorococcus marinus (strain SARG / CCMP1375 / SS120), this protein is Large ribosomal subunit protein bL17.